The sequence spans 285 residues: Nucleotide-binding protein Pfl01_0854 (285 aa).

8-15 (GRSGSGKS) is a binding site for ATP. 60 to 63 (DARN) provides a ligand contact to GTP.

Belongs to the RapZ-like family.

Displays ATPase and GTPase activities. The chain is Nucleotide-binding protein Pfl01_0854 from Pseudomonas fluorescens (strain Pf0-1).